A 214-amino-acid polypeptide reads, in one-letter code: Pyridoxine/pyridoxamine 5'-phosphate oxidase (214 aa).

Substrate is bound by residues 8-11 (RINY) and K66. Residues 61-66 (RIVLIK), 76-77 (FT), R82, K83, and Q105 each bind FMN. Substrate is bound by residues Y123, R127, and S131. FMN contacts are provided by residues 140–141 (QS) and W184. 190 to 192 (RLH) lines the substrate pocket. Residue R194 coordinates FMN.

This sequence belongs to the pyridoxamine 5'-phosphate oxidase family. Homodimer. Requires FMN as cofactor.

The enzyme catalyses pyridoxamine 5'-phosphate + O2 + H2O = pyridoxal 5'-phosphate + H2O2 + NH4(+). It catalyses the reaction pyridoxine 5'-phosphate + O2 = pyridoxal 5'-phosphate + H2O2. Its pathway is cofactor metabolism; pyridoxal 5'-phosphate salvage; pyridoxal 5'-phosphate from pyridoxamine 5'-phosphate: step 1/1. The protein operates within cofactor metabolism; pyridoxal 5'-phosphate salvage; pyridoxal 5'-phosphate from pyridoxine 5'-phosphate: step 1/1. In terms of biological role, catalyzes the oxidation of either pyridoxine 5'-phosphate (PNP) or pyridoxamine 5'-phosphate (PMP) into pyridoxal 5'-phosphate (PLP). The polypeptide is Pyridoxine/pyridoxamine 5'-phosphate oxidase (Burkholderia lata (strain ATCC 17760 / DSM 23089 / LMG 22485 / NCIMB 9086 / R18194 / 383)).